The sequence spans 202 residues: Cytochrome c oxidase assembly protein CtaG (202 aa).

Residues Met-1–Arg-13 are Cytoplasmic-facing. A helical; Signal-anchor for type II membrane protein transmembrane segment spans residues Asn-14–Ala-36. Over Val-37–Leu-202 the chain is Periplasmic. Residues Glu-183–Leu-202 form a disordered region.

Belongs to the COX11/CtaG family.

It is found in the cell inner membrane. Exerts its effect at some terminal stage of cytochrome c oxidase synthesis, probably by being involved in the insertion of the copper B into subunit I. This chain is Cytochrome c oxidase assembly protein CtaG, found in Rhizobium etli (strain CIAT 652).